We begin with the raw amino-acid sequence, 180 residues long: Crossover junction endodeoxyribonuclease RuvC (180 aa).

Residues aspartate 7, glutamate 66, and aspartate 138 contribute to the active site. The Mg(2+) site is built by aspartate 7, glutamate 66, and aspartate 138.

The protein belongs to the RuvC family. Homodimer which binds Holliday junction (HJ) DNA. The HJ becomes 2-fold symmetrical on binding to RuvC with unstacked arms; it has a different conformation from HJ DNA in complex with RuvA. In the full resolvosome a probable DNA-RuvA(4)-RuvB(12)-RuvC(2) complex forms which resolves the HJ. The cofactor is Mg(2+).

Its subcellular location is the cytoplasm. It catalyses the reaction Endonucleolytic cleavage at a junction such as a reciprocal single-stranded crossover between two homologous DNA duplexes (Holliday junction).. Its function is as follows. The RuvA-RuvB-RuvC complex processes Holliday junction (HJ) DNA during genetic recombination and DNA repair. Endonuclease that resolves HJ intermediates. Cleaves cruciform DNA by making single-stranded nicks across the HJ at symmetrical positions within the homologous arms, yielding a 5'-phosphate and a 3'-hydroxyl group; requires a central core of homology in the junction. The consensus cleavage sequence is 5'-(A/T)TT(C/G)-3'. Cleavage occurs on the 3'-side of the TT dinucleotide at the point of strand exchange. HJ branch migration catalyzed by RuvA-RuvB allows RuvC to scan DNA until it finds its consensus sequence, where it cleaves and resolves the cruciform DNA. This chain is Crossover junction endodeoxyribonuclease RuvC, found in Burkholderia multivorans (strain ATCC 17616 / 249).